The primary structure comprises 372 residues: 2,7-anhydro-N-acetylneuraminate hydratase (372 aa).

The NAD(+) site is built by Tyr-11, Phe-12, Asp-33, Asn-36, Thr-68, Asn-70, His-73, Glu-90, Lys-91, and Trp-160.

Belongs to the Gfo/Idh/MocA family. In terms of assembly, homodimer. NAD(+) serves as cofactor.

The catalysed reaction is N-acetyl-2,7-anhydro-alpha-neuraminate + H2O = N-acetyl-alpha-neuraminate. It catalyses the reaction 2-deoxy-2,3-dehydro-N-acetylneuraminate + H2O = N-acetyl-alpha-neuraminate. Its activity is regulated as follows. All conversions require NAD(+) as a cofactor, which is regenerated in the reaction. The presence of EGTA and several divalent cations does not affect the activity. Hydratase involved in the degradation of sialic acids. Catalyzes the reversible conversion of the dehydrated form of N-acetylneuraminate (Neu5Ac), 2,7-anhydro-N-acetylneuraminate (2,7-AN), to Neu5Ac. Also catalyzes the irreversible conversion of 2-deoxy-2,3-didehydro-N-acetylneuraminate (2,3-EN) to Neu5Ac. The reaction mechanism involves keto intermediates and the transient formation of NADH. This is 2,7-anhydro-N-acetylneuraminate hydratase from Escherichia coli (strain K12).